The chain runs to 574 residues: Septation ring formation regulator EzrA (574 aa).

At 1–7 (MSSGIIL) the chain is on the extracellular side. The chain crosses the membrane as a helical span at residues 8–26 (LIVAIVLLVIIAYLVGVII). The Cytoplasmic portion of the chain corresponds to 27-574 (RKRNDTLITS…YEKTRERIRF (548 aa)). Coiled coils occupy residues 102–131 (NFIR…REAL), 161–190 (ENED…FVAL), 276–379 (VTLD…QQEK), and 459–493 (QLEA…NLEE).

The protein belongs to the EzrA family.

It localises to the cell membrane. In terms of biological role, negative regulator of FtsZ ring formation; modulates the frequency and position of FtsZ ring formation. Inhibits FtsZ ring formation at polar sites. Interacts either with FtsZ or with one of its binding partners to promote depolymerization. This Streptococcus equi subsp. zooepidemicus (strain H70) protein is Septation ring formation regulator EzrA.